A 453-amino-acid polypeptide reads, in one-letter code: MHIQSLQQSPSFAVELHQAASGRLGQIEARQVATPSEAQQLAQRQDAPKGEGLLARLGAALVRPFVAIMDWLGKLLGSHARTGPQPSQDAQPAVMSSAVVFKQMVLQQALPMTLKGLDKASELATLTPEGLAREHSRLASGDGALRSLSTALAGIRAGSQVEESRIQAGRLLERSIGGIALQQWGTTGGAASQLVLDASPELRREITDQLHQVMSEVALLRQAVESEVSRVSADKALADGLVKRFGADAEKYLGRQPGGIHSDAEVMALGLYTGIHYADLNRALRQGQELDAGQKLIDQGMSAAFEKSGQAEQVVKTFRGTRGGDAFNAVEEGKVGHDDGYLSTSLNPGVARSFGQGTISTVFGRSGIDVSGISNYKNEKEILYNKETDMRVLLSASDEQGVTRRVLEEAALGEQSGHSQGLLDALDLASKPERSGEVQEQDVRLRMRGLDLA.

In terms of domain architecture, Bacterial Rho-GAP spans 96–229; that stretch reads SSAVVFKQMV…LRQAVESEVS (134 aa). One can recognise a TR mART core domain in the interval 239–414; sequence DGLVKRFGAD…RVLEEAALGE (176 aa). Active-site residues include R319, S343, and E381.

Its subcellular location is the secreted. The enzyme catalyses L-arginyl-[protein] + NAD(+) = N(omega)-(ADP-D-ribosyl)-L-arginyl-[protein] + nicotinamide + H(+). Its function is as follows. Bifunctional effector protein that is secreted and delivered by the type III secretion system into eukaryotic target cells. ADP-ribosylates several eukaryotic proteins including ezrin/radixin/moesin (ERM), cyclophilin A and several members of the Ras superfamily. Host Ras ADP-ribosylation blocks its activation by its guanine nucleotide exchange factor, thereby interfering with Ras-mediated signal transduction. For instance, prevents Ras from interacting with and activating phosphoinositol-3-kinase (PI3K), which is required to stimulate the phagocytic NADPH-oxidase that generates reactive oxygen species. The TR mART core domain also contributes to bacterial dissemination to the blood during pneumonia. In addition to this activity, acts via its N-terminal region as a GTPase-activating protein (GAP) for host Rho GTPases including RhoA, Rac1, Cdc42 and Ras. The bacterial Rho-GAP domain activity induces mitochondrial disruption in the target host cell by activating host caspases 3 and 9 that execute cellular death. The protein is Secreted exoenzyme S (exoS) of Pseudomonas aeruginosa (strain ATCC 15692 / DSM 22644 / CIP 104116 / JCM 14847 / LMG 12228 / 1C / PRS 101 / PAO1).